The following is a 400-amino-acid chain: Phosphoglycerate kinase (400 aa).

Residues 19 to 21 (DLN), Arg38, 61 to 64 (HLGR), Arg124, and Arg161 contribute to the substrate site. ATP contacts are provided by residues Lys211, Gly299, Glu330, and 356–359 (GGDS).

It belongs to the phosphoglycerate kinase family. In terms of assembly, monomer.

The protein resides in the cytoplasm. The catalysed reaction is (2R)-3-phosphoglycerate + ATP = (2R)-3-phospho-glyceroyl phosphate + ADP. The protein operates within carbohydrate degradation; glycolysis; pyruvate from D-glyceraldehyde 3-phosphate: step 2/5. In Parafrankia sp. (strain EAN1pec), this protein is Phosphoglycerate kinase.